The following is a 300-amino-acid chain: Peroxisomal 2,4-dienoyl-CoA reductase [(3E)-enoyl-CoA-producing] (300 aa).

Residues 42–47 (GGGSGI), 67–71 (RNLEK), and aspartate 93 contribute to the NADP(+) site. Position 67 (arginine 67) interacts with substrate. Residues arginine 95, phenylalanine 125, and 133–135 (SFN) each bind substrate. NADP(+) is bound by residues lysine 189 and 215–221 (PGPISGT). Arginine 226 is a substrate binding site. Positions 298–300 (AKL) match the Microbody targeting signal motif.

This sequence belongs to the short-chain dehydrogenases/reductases (SDR) family. 2,4-dienoyl-CoA reductase subfamily. As to quaternary structure, monomer, dimer and oligomer.

It is found in the peroxisome. It carries out the reaction a (2E,4Z)-dienoyl-CoA + NADPH + H(+) = a 4,5-saturated-(3E)-enoyl-CoA + NADP(+). The catalysed reaction is a (2E,4E)-dienoyl-CoA + NADPH + H(+) = a 4,5-saturated-(3E)-enoyl-CoA + NADP(+). It catalyses the reaction (2E,4E)-hexadienoyl-CoA + NADPH + H(+) = (3E)-hexenoyl-CoA + NADP(+). The enzyme catalyses (2E,4E)-decadienoyl-CoA + NADPH + H(+) = (3E)-decenoyl-CoA + NADP(+). It carries out the reaction (2E,4Z,7Z,10Z,13Z,16Z,19Z)-docosaheptaenoyl-CoA + NADPH + H(+) = (3E,7Z,10Z,13Z,16Z,19Z)-docosahexaenoyl-CoA + NADP(+). Auxiliary enzyme of beta-oxidation. Participates in the degradation of unsaturated fatty enoyl-CoA esters having double bonds in both even- and odd-numbered positions in peroxisome. Catalyzes the NADP-dependent reduction of 2,4-dienoyl-CoA to yield trans-3-enoyl-CoA. The polypeptide is Peroxisomal 2,4-dienoyl-CoA reductase [(3E)-enoyl-CoA-producing] (decr2) (Danio rerio (Zebrafish)).